The primary structure comprises 250 residues: Phosphoribosylaminoimidazole-succinocarboxamide synthase (250 aa).

Belongs to the SAICAR synthetase family.

The catalysed reaction is 5-amino-1-(5-phospho-D-ribosyl)imidazole-4-carboxylate + L-aspartate + ATP = (2S)-2-[5-amino-1-(5-phospho-beta-D-ribosyl)imidazole-4-carboxamido]succinate + ADP + phosphate + 2 H(+). It functions in the pathway purine metabolism; IMP biosynthesis via de novo pathway; 5-amino-1-(5-phospho-D-ribosyl)imidazole-4-carboxamide from 5-amino-1-(5-phospho-D-ribosyl)imidazole-4-carboxylate: step 1/2. The chain is Phosphoribosylaminoimidazole-succinocarboxamide synthase from Picosynechococcus sp. (strain ATCC 27264 / PCC 7002 / PR-6) (Agmenellum quadruplicatum).